A 197-amino-acid polypeptide reads, in one-letter code: Probable nicotinate-nucleotide adenylyltransferase (197 aa).

Belongs to the NadD family.

It carries out the reaction nicotinate beta-D-ribonucleotide + ATP + H(+) = deamido-NAD(+) + diphosphate. Its pathway is cofactor biosynthesis; NAD(+) biosynthesis; deamido-NAD(+) from nicotinate D-ribonucleotide: step 1/1. Functionally, catalyzes the reversible adenylation of nicotinate mononucleotide (NaMN) to nicotinic acid adenine dinucleotide (NaAD). This is Probable nicotinate-nucleotide adenylyltransferase from Bordetella avium (strain 197N).